We begin with the raw amino-acid sequence, 480 residues long: O-acyltransferase ausP (480 aa).

Catalysis depends on proton acceptor residues His180 and Asp412.

Belongs to the plant acyltransferase family. As to quaternary structure, monomer.

Its pathway is secondary metabolite biosynthesis; terpenoid biosynthesis. Its function is as follows. O-acyltransferase; part of the gene cluster that mediates the biosynthesis of calidodehydroaustin, a fungal meroterpenoid. The first step of the pathway is the synthesis of 3,5-dimethylorsellinic acid by the polyketide synthase ausA. 3,5-dimethylorsellinic acid is then prenylated by the polyprenyl transferase ausN. Further epoxidation by the FAD-dependent monooxygenase ausM and cyclization by the probable terpene cyclase ausL lead to the formation of protoaustinoid A. Protoaustinoid A is then oxidized to spiro-lactone preaustinoid A3 by the combined action of the FAD-binding monooxygenases ausB and ausC, and the dioxygenase ausE. Acid-catalyzed keto-rearrangement and ring contraction of the tetraketide portion of preaustinoid A3 by ausJ lead to the formation of preaustinoid A4. The aldo-keto reductase ausK, with the help of ausH, is involved in the next step by transforming preaustinoid A4 into isoaustinone which is in turn hydroxylated by the P450 monooxygenase ausI to form austinolide. The cytochrome P450 monooxygenase ausG modifies austinolide to austinol. Austinol is further acetylated to austin by the O-acetyltransferase ausP, which spontaneously changes to dehydroaustin. The cytochrome P450 monooxygenase ausR then converts dehydroaustin is into 7-dehydrodehydroaustin. The hydroxylation catalyzed by ausR permits the O-acetyltransferase ausQ to add an additional acetyl group to the molecule, leading to the formation of acetoxydehydroaustin. The short chain dehydrogenase ausT catalyzes the reduction of the double bond present between carbon atoms 1 and 2 to convert 7-dehydrodehydroaustin into 1,2-dihydro-7-hydroxydehydroaustin. AusQ catalyzes not only an acetylation reaction but also the addition of the PKS ausV diketide product to 1,2-dihydro-7-hydroxydehydroaustin, forming precalidodehydroaustin. Finally, the iron/alpha-ketoglutarate-dependent dioxygenase converts precalidodehydroaustin into calidodehydroaustin. In Aspergillus calidoustus, this protein is O-acyltransferase ausP.